We begin with the raw amino-acid sequence, 340 residues long: Ketol-acid reductoisomerase (NADP(+)) (340 aa).

The KARI N-terminal Rossmann domain maps to 2–182 (AELYYDNQAD…GCTRAGVLRT (181 aa)). NADP(+) contacts are provided by residues 25–28 (FGSQ), Ser51, Ser53, and 83–86 (DIGQ). Residue His108 is part of the active site. Gly134 provides a ligand contact to NADP(+). Residues 183 to 328 (TFAEETETDL…RELRRMMPFV (146 aa)) form the KARI C-terminal knotted domain. Asp191, Glu195, Glu227, and Glu231 together coordinate Mg(2+). Substrate is bound at residue Ser252.

This sequence belongs to the ketol-acid reductoisomerase family. The cofactor is Mg(2+).

The enzyme catalyses (2R)-2,3-dihydroxy-3-methylbutanoate + NADP(+) = (2S)-2-acetolactate + NADPH + H(+). It catalyses the reaction (2R,3R)-2,3-dihydroxy-3-methylpentanoate + NADP(+) = (S)-2-ethyl-2-hydroxy-3-oxobutanoate + NADPH + H(+). The protein operates within amino-acid biosynthesis; L-isoleucine biosynthesis; L-isoleucine from 2-oxobutanoate: step 2/4. Its pathway is amino-acid biosynthesis; L-valine biosynthesis; L-valine from pyruvate: step 2/4. Involved in the biosynthesis of branched-chain amino acids (BCAA). Catalyzes an alkyl-migration followed by a ketol-acid reduction of (S)-2-acetolactate (S2AL) to yield (R)-2,3-dihydroxy-isovalerate. In the isomerase reaction, S2AL is rearranged via a Mg-dependent methyl migration to produce 3-hydroxy-3-methyl-2-ketobutyrate (HMKB). In the reductase reaction, this 2-ketoacid undergoes a metal-dependent reduction by NADPH to yield (R)-2,3-dihydroxy-isovalerate. The polypeptide is Ketol-acid reductoisomerase (NADP(+)) (Chloroflexus aggregans (strain MD-66 / DSM 9485)).